A 67-amino-acid polypeptide reads, in one-letter code: uncharacterized protein (67 aa).

Residues 17 to 47 (AASLQELEKKINTQIENNKAIMLRVKSVSHQ) are a coiled coil.

This is an uncharacterized protein from Bacillus subtilis (strain 168).